The primary structure comprises 161 residues: Allophycocyanin beta chain (161 aa).

N71 is subject to N4-methylasparagine. C81 is a binding site for (2R,3E)-phycocyanobilin.

Belongs to the phycobiliprotein family. Heterodimer of an alpha and a beta chain. Contains one covalently linked phycocyanobilin chromophore.

The protein localises to the cellular thylakoid membrane. Light-harvesting photosynthetic bile pigment-protein from the phycobiliprotein complex. Allophycocyanin has a maximum absorption at approximately 650 nanometers. The protein is Allophycocyanin beta chain (apcB) of Synechocystis sp. (strain ATCC 27184 / PCC 6803 / Kazusa).